A 299-amino-acid polypeptide reads, in one-letter code: Taste receptor type 2 member 4 (299 aa).

Residues 1-9 (MLRLFYFSA) lie on the Extracellular side of the membrane. Residues 10–30 (IIASVILNFVGIIMNLFITVV) form a helical membrane-spanning segment. Over 31 to 46 (NCKTWVKSHRISSSDR) the chain is Cytoplasmic. Residues 47–67 (ILFSLGITRFLMLGLFLVNTI) form a helical membrane-spanning segment. Topologically, residues 68 to 81 (YFVSSNTERSVYLS) are extracellular. A helical membrane pass occupies residues 82–102 (AFFVLCFMFLDSSSLWFVTLL). Over 103-131 (NILYCVKITNFQHSVFLLLKRNISPKIPR) the chain is Cytoplasmic. A helical transmembrane segment spans residues 132-152 (LLLACVLISAFTTCLYITLSQ). The Extracellular segment spans residues 153–172 (ASPFPELVTTRNNTSFNINE). N-linked (GlcNAc...) asparagine glycosylation is found at asparagine 164 and asparagine 165. Residues 173-193 (GILSLVVSLVLSSSLQFIINV) traverse the membrane as a helical segment. Residues 194 to 230 (TSASLLIHSLRRHIQKMQKNATGFWNPQTEAHVGAMK) are Cytoplasmic-facing. The helical transmembrane segment at 231–251 (LMVYFLILYIPYSVATLVQYL) threads the bilayer. The Extracellular portion of the chain corresponds to 252–262 (PFYAGMDMGTK). The helical transmembrane segment at 263–283 (SICLIFATLYSPGHSVLIIIT) threads the bilayer. At 284 to 299 (HPKLKTTAKKILCFKK) the chain is on the cytoplasmic side.

Belongs to the G-protein coupled receptor T2R family.

Its subcellular location is the membrane. It is found in the cell projection. The protein localises to the cilium membrane. Functionally, gustducin-coupled receptor implicated in the perception of bitter compounds in the oral cavity and the gastrointestinal tract. Signals through PLCB2 and the calcium-regulated cation channel TRPM5. In airway epithelial cells, binding of denatonium increases the intracellular calcium ion concentration and stimulates ciliary beat frequency. In Pan paniscus (Pygmy chimpanzee), this protein is Taste receptor type 2 member 4 (TAS2R4).